The sequence spans 284 residues: D-tagatose-1,6-bisphosphate aldolase subunit GatY (284 aa).

Catalysis depends on Asp82, which acts as the Proton donor. Residues His83 and His180 each coordinate Zn(2+). Gly181 contributes to the dihydroxyacetone phosphate binding site. Residue His208 participates in Zn(2+) binding. Residues 209–211 (GAS) and 230–233 (NVAT) contribute to the dihydroxyacetone phosphate site.

This sequence belongs to the class II fructose-bisphosphate aldolase family. TagBP aldolase GatY subfamily. In terms of assembly, forms a complex with GatZ. Requires Zn(2+) as cofactor.

The catalysed reaction is D-tagatofuranose 1,6-bisphosphate = D-glyceraldehyde 3-phosphate + dihydroxyacetone phosphate. It participates in carbohydrate metabolism; D-tagatose 6-phosphate degradation; D-glyceraldehyde 3-phosphate and glycerone phosphate from D-tagatose 6-phosphate: step 2/2. Catalytic subunit of the tagatose-1,6-bisphosphate aldolase GatYZ, which catalyzes the reversible aldol condensation of dihydroxyacetone phosphate (DHAP or glycerone-phosphate) with glyceraldehyde 3-phosphate (G3P) to produce tagatose 1,6-bisphosphate (TBP). Requires GatZ subunit for full activity and stability. Is involved in the catabolism of galactitol. This Escherichia coli O157:H7 protein is D-tagatose-1,6-bisphosphate aldolase subunit GatY.